We begin with the raw amino-acid sequence, 236 residues long: 4-aminobenzoate synthase (236 aa).

Fe(2+) contacts are provided by E87, H94, E148, H180, D184, and H187.

The protein belongs to the CADD family. As to quaternary structure, homodimer. Fe(2+) is required as a cofactor. Requires Mn(2+) as cofactor.

Its function is as follows. Involved in de novo para-aminobenzoate (PABA) biosynthesis. Acts as a self-sacrificing or 'suicide' enzyme that utilizes its own active site tyrosine residue(s) as the substrate for PABA synthesis. The side chain of the tyrosine residue is released from the protein backbone via cleavage of the C(alpha)-C(beta) bond, leaving a glycine in place of the original tyrosine residue. Reaction requires O(2) and a reduced dimetal cofactor. The chain is 4-aminobenzoate synthase from Chlamydia muridarum (strain MoPn / Nigg).